A 93-amino-acid chain; its full sequence is Co-chaperonin GroES (93 aa).

This sequence belongs to the GroES chaperonin family. In terms of assembly, heptamer of 7 subunits arranged in a ring. Interacts with the chaperonin GroEL.

Its subcellular location is the cytoplasm. Its function is as follows. Together with the chaperonin GroEL, plays an essential role in assisting protein folding. The GroEL-GroES system forms a nano-cage that allows encapsulation of the non-native substrate proteins and provides a physical environment optimized to promote and accelerate protein folding. GroES binds to the apical surface of the GroEL ring, thereby capping the opening of the GroEL channel. The sequence is that of Co-chaperonin GroES from Streptococcus anginosus.